The primary structure comprises 546 residues: CTP synthase (546 aa).

The tract at residues 1–269 is amidoligase domain; it reads MNPNTKIIFV…DAKLVELLNL (269 aa). Residue Ser16 participates in CTP binding. Ser16 serves as a coordination point for UTP. Residues 17–22 and Asp74 contribute to the ATP site; that span reads SLGKGV. Asp74 and Glu143 together coordinate Mg(2+). CTP-binding positions include 150 to 152, 190 to 195, and Lys226; these read DIE and KTKPTQ. Residues 190 to 195 and Lys226 each bind UTP; that span reads KTKPTQ. The region spanning 294–546 is the Glutamine amidotransferase type-1 domain; the sequence is TIAMVGKYVS…IHAAVEKSNK (253 aa). Position 356 (Gly356) interacts with L-glutamine. Cys383 (nucleophile; for glutamine hydrolysis) is an active-site residue. L-glutamine contacts are provided by residues 384–387, Glu407, and Arg474; that span reads LGMQ. Active-site residues include His519 and Glu521.

The protein belongs to the CTP synthase family. As to quaternary structure, homotetramer.

The enzyme catalyses UTP + L-glutamine + ATP + H2O = CTP + L-glutamate + ADP + phosphate + 2 H(+). It catalyses the reaction L-glutamine + H2O = L-glutamate + NH4(+). The catalysed reaction is UTP + NH4(+) + ATP = CTP + ADP + phosphate + 2 H(+). The protein operates within pyrimidine metabolism; CTP biosynthesis via de novo pathway; CTP from UDP: step 2/2. With respect to regulation, allosterically activated by GTP, when glutamine is the substrate; GTP has no effect on the reaction when ammonia is the substrate. The allosteric effector GTP functions by stabilizing the protein conformation that binds the tetrahedral intermediate(s) formed during glutamine hydrolysis. Inhibited by the product CTP, via allosteric rather than competitive inhibition. Functionally, catalyzes the ATP-dependent amination of UTP to CTP with either L-glutamine or ammonia as the source of nitrogen. Regulates intracellular CTP levels through interactions with the four ribonucleotide triphosphates. This Francisella philomiragia subsp. philomiragia (strain ATCC 25017 / CCUG 19701 / FSC 153 / O#319-036) protein is CTP synthase.